A 396-amino-acid polypeptide reads, in one-letter code: Elongation factor Tu (396 aa).

A tr-type G domain is found at 10-206; that stretch reads KPHVNVGTIG…ALDTYIPEPE (197 aa). A G1 region spans residues 19–26; that stretch reads GHVDHGKT. GTP is bound at residue 19 to 26; it reads GHVDHGKT. T26 contacts Mg(2+). Residues 60-64 form a G2 region; the sequence is GITIN. A G3 region spans residues 81 to 84; that stretch reads DCPG. GTP is bound by residues 81–85 and 136–139; these read DCPGH and NKAD. The segment at 136–139 is G4; that stretch reads NKAD. The G5 stretch occupies residues 174 to 176; sequence SAL.

It belongs to the TRAFAC class translation factor GTPase superfamily. Classic translation factor GTPase family. EF-Tu/EF-1A subfamily. As to quaternary structure, monomer.

The protein resides in the cytoplasm. The enzyme catalyses GTP + H2O = GDP + phosphate + H(+). GTP hydrolase that promotes the GTP-dependent binding of aminoacyl-tRNA to the A-site of ribosomes during protein biosynthesis. The sequence is that of Elongation factor Tu from Thiobacillus denitrificans (strain ATCC 25259 / T1).